A 459-amino-acid polypeptide reads, in one-letter code: Glycosyl hydrolase family 109 protein 1 (459 aa).

A signal peptide (tat-type signal) is located at residues 1 to 31; the sequence is MHNIHRRHFLKAAGAVTAGLVTANIALNANA. NAD(+)-binding positions include 64–65, Asp-86, 135–138, 155–156, and Asn-184; these read ER, WEWH, and EV. Substrate is bound by residues Tyr-213, Arg-232, 244–247, and Tyr-326; that span reads YPTH. Residue Tyr-244 participates in NAD(+) binding.

The protein belongs to the Gfo/Idh/MocA family. Glycosyl hydrolase 109 subfamily. Requires NAD(+) as cofactor. Post-translationally, predicted to be exported by the Tat system. The position of the signal peptide cleavage has not been experimentally proven.

Functionally, glycosidase. The sequence is that of Glycosyl hydrolase family 109 protein 1 from Shewanella sp. (strain MR-7).